Here is a 287-residue protein sequence, read N- to C-terminus: Proteasome subunit alpha (287 aa).

Residues 241–287 (GVVAGEEPHTAAHAPSVPQPGAPAGLGDPGAPDTGGTAGSGGEAPTT) are disordered. The span at 262 to 275 (APAGLGDPGAPDTG) shows a compositional bias: low complexity. Over residues 276–287 (GTAGSGGEAPTT) the composition is skewed to gly residues.

Belongs to the peptidase T1A family. In terms of assembly, the 20S proteasome core is composed of 14 alpha and 14 beta subunits that assemble into four stacked heptameric rings, resulting in a barrel-shaped structure. The two inner rings, each composed of seven catalytic beta subunits, are sandwiched by two outer rings, each composed of seven alpha subunits. The catalytic chamber with the active sites is on the inside of the barrel. Has a gated structure, the ends of the cylinder being occluded by the N-termini of the alpha-subunits. Is capped by the proteasome-associated ATPase, ARC.

Its subcellular location is the cytoplasm. It participates in protein degradation; proteasomal Pup-dependent pathway. The formation of the proteasomal ATPase ARC-20S proteasome complex, likely via the docking of the C-termini of ARC into the intersubunit pockets in the alpha-rings, may trigger opening of the gate for substrate entry. Interconversion between the open-gate and close-gate conformations leads to a dynamic regulation of the 20S proteasome proteolysis activity. Its function is as follows. Component of the proteasome core, a large protease complex with broad specificity involved in protein degradation. The sequence is that of Proteasome subunit alpha from Geodermatophilus obscurus (strain ATCC 25078 / DSM 43160 / JCM 3152 / CCUG 61914 / KCC A-0152 / KCTC 9177 / NBRC 13315 / NRRL B-3577 / G-20).